The sequence spans 621 residues: MSGCGLFLRTTAAARACRGLVVSTANRRLLRTSPPVRAFAKELFLGKIKKKEVFPFPEVSQDELNEINQFLGPVEKFFTEEVDSRKIDQEGKIPDETLEKLKSLGLFGLQVPEEYGGLGFSNTMYSRLGEIISMDGSITVTLAAHQAIGLKGIILAGTEEQKAKYLPKLASGEHIAAFCLTEPASGSDAASIRSRATLSEDKKHYILNGSKVWITNGGLANIFTVFAKTEVVDSDGSVKDKITAFIVERDFGGVTNGKPEDKLGIRGSNTCEVHFENTKIPVENILGEVGDGFKVAMNILNSGRFSMGSVVAGLLKRLIEMTAEYACTRKQFNKRLSEFGLIQEKFALMAQKAYVMESMTYLTAGMLDQPGFPDCSIEAAMVKVFSSEAAWQCVSEALQILGGLGYTRDYPYERILRDTRILLIFEGTNEILRMYIALTGLQHAGRILTTRIHELKQAKVSTVMDTVGRRLRDSLGRTVDLGLTGNHGVVHPSLADSANKFEENTYCFGRTVETLLLRFGKTIMEEQLVLKRVANILINLYGMTAVLSRASRSIRIGLRNHDHEVLLANTFCVEAYLQNLFSLSQLDKYAPENLDEQIKKVSQQILEKRAYICAHPLDRTC.

A mitochondrion-targeting transit peptide spans 1–37 (MSGCGLFLRTTAAARACRGLVVSTANRRLLRTSPPVR). At Lys41 the chain carries N6-acetyllysine. Lys92 is subject to N6-succinyllysine. The Proton acceptor role is filled by Glu426. A Phosphothreonine modification is found at Thr478. Lys521 carries the post-translational modification N6-acetyllysine; alternate. Position 521 is an N6-succinyllysine; alternate (Lys521).

The protein belongs to the acyl-CoA dehydrogenase family. In terms of assembly, homodimer. Interacts with NDUFAF1 and ECSIT. Part of the mitochondrial complex I assembly/MCIA complex that comprises at least the core subunits TMEM126B, NDUFAF1, ECSIT and ACAD9 and complement subunits such as COA1 and TMEM186. Interacts with TMEM70 and TMEM242. It depends on FAD as a cofactor. In terms of tissue distribution, ubiquitously expressed in most normal human tissues and cancer cell lines with high level of expression in heart, skeletal muscles, brain, kidney and liver. In the cerebellum uniquely expressed in the granular layer (at protein level).

The protein resides in the mitochondrion inner membrane. It catalyses the reaction eicosanoyl-CoA + oxidized [electron-transfer flavoprotein] + H(+) = (2E)-eicosenoyl-CoA + reduced [electron-transfer flavoprotein]. The catalysed reaction is octadecanoyl-CoA + oxidized [electron-transfer flavoprotein] + H(+) = (2E)-octadecenoyl-CoA + reduced [electron-transfer flavoprotein]. It carries out the reaction oxidized [electron-transfer flavoprotein] + hexadecanoyl-CoA + H(+) = (2E)-hexadecenoyl-CoA + reduced [electron-transfer flavoprotein]. The enzyme catalyses decanoyl-CoA + oxidized [electron-transfer flavoprotein] + H(+) = (2E)-decenoyl-CoA + reduced [electron-transfer flavoprotein]. It catalyses the reaction nonanoyl-CoA + oxidized [electron-transfer flavoprotein] + H(+) = (2E)-nonenoyl-CoA + reduced [electron-transfer flavoprotein]. The catalysed reaction is pentadecanoyl-CoA + oxidized [electron-transfer flavoprotein] + H(+) = (2E)-pentadecenoyl-CoA + reduced [electron-transfer flavoprotein]. It carries out the reaction undecanoyl-CoA + oxidized [electron-transfer flavoprotein] + H(+) = trans-2-undecenoyl-CoA + reduced [electron-transfer flavoprotein]. The enzyme catalyses (9Z)-hexadecenoyl-CoA + oxidized [electron-transfer flavoprotein] + H(+) = (2E,9Z)-hexadecadienoyl-CoA + reduced [electron-transfer flavoprotein]. It catalyses the reaction heptadecanoyl-CoA + oxidized [electron-transfer flavoprotein] + H(+) = trans-2-heptadecenoyl-CoA + reduced [electron-transfer flavoprotein]. The catalysed reaction is (9E)-octadecenoyl-CoA + oxidized [electron-transfer flavoprotein] + H(+) = (2E,9E)-octadecadienoyl-CoA + reduced [electron-transfer flavoprotein]. It carries out the reaction oxidized [electron-transfer flavoprotein] + (9Z)-octadecenoyl-CoA + H(+) = (2E,9Z)-octadecadienoyl-CoA + reduced [electron-transfer flavoprotein]. The enzyme catalyses (9Z,12Z)-octadecadienoyl-CoA + oxidized [electron-transfer flavoprotein] + H(+) = (2E,9Z,12Z)-octadecatrienoyl-CoA + reduced [electron-transfer flavoprotein]. It catalyses the reaction (4Z,7Z,10Z,13Z,16Z,19Z)-docosahexaenoyl-CoA + oxidized [electron-transfer flavoprotein] + H(+) = (2E,4Z,7Z,10Z,13Z,16Z,19Z)-docosaheptaenoyl-CoA + reduced [electron-transfer flavoprotein]. The catalysed reaction is tetradecanoyl-CoA + oxidized [electron-transfer flavoprotein] + H(+) = (2E)-tetradecenoyl-CoA + reduced [electron-transfer flavoprotein]. Its function is as follows. As part of the MCIA complex, primarily participates in the assembly of the mitochondrial complex I and therefore plays a role in oxidative phosphorylation. This moonlighting protein also has a dehydrogenase activity toward a broad range of substrates with greater specificity for long-chain unsaturated acyl-CoAs. However, in vivo, it does not seem to play a primary role in fatty acid oxidation. In addition, the function in complex I assembly is independent of the dehydrogenase activity of the protein. This Homo sapiens (Human) protein is Complex I assembly factor ACAD9, mitochondrial.